We begin with the raw amino-acid sequence, 865 residues long: 3-O-alpha-D-mannopyranosyl-alpha-D-mannopyranose xylosylphosphotransferase (865 aa).

Polar residues predominate over residues 1 to 10; the sequence is MLSTALSPSS. Residues 1–66 form a disordered region; the sequence is MLSTALSPSS…CRPSRSPRSR (66 aa). Topologically, residues 1–84 are cytoplasmic; the sequence is MLSTALSPSS…HIRPHLTPRT (84 aa). 2 stretches are compositionally biased toward low complexity: residues 17 to 26 and 40 to 60; these read SYSSSLSPTS and SPSP…CRPS. The helical transmembrane segment at 85–105 threads the bilayer; the sequence is LTMLFLWMLSVWSIHHFFLPI. Residues 106-865 are Lumenal-facing; the sequence is SSLSRLSNPR…WDPVKDRYID (760 aa). Residues Asn-201 and Asn-302 are each glycosylated (N-linked (GlcNAc...) asparagine). The interval 283-304 is disordered; it reads KSKGRRHPRDLPGTPPSFSNLT.

The protein belongs to the XPT1 family. Mn(2+) is required as a cofactor.

The protein localises to the golgi apparatus membrane. The catalysed reaction is 3-alpha-D-mannopyranosyl-alpha-D-mannopyranose + UDP-alpha-D-xylose = 3-O-(6-O-alpha-D-xylosylphospho-alpha-D-mannopyranosyl)-alpha-D-mannopyranose + UMP + H(+). Xylosylphosphotransferase that is specific for UDP-xylose as a donor and mannose as an acceptor to form a xylose-alpha-1-phosphate-6-mannose linkage. Functions in the O-glycosylation of proteins en route through the secretory pathway. This is 3-O-alpha-D-mannopyranosyl-alpha-D-mannopyranose xylosylphosphotransferase (XPT1) from Cryptococcus gattii serotype B (strain WM276 / ATCC MYA-4071) (Filobasidiella gattii).